Here is a 423-residue protein sequence, read N- to C-terminus: COP9 signalosome complex subunit 3 (423 aa).

Positions 197–365 constitute a PCI domain; that stretch reads NFERALYFYE…GMVCFHDNPE (169 aa). A disordered region spans residues 403 to 423; sequence FVQKSMGSQDDDSGSKPSSYS.

This sequence belongs to the CSN3 family. As to quaternary structure, component of the CSN complex, probably composed of cops1, cops2, cops3, cops4, cops5, cops6, cops7, cops8 and cops9.

Its subcellular location is the cytoplasm. The protein localises to the nucleus. In terms of biological role, component of the COP9 signalosome complex (CSN), a complex involved in various cellular and developmental processes. The CSN complex is an essential regulator of the ubiquitin (Ubl) conjugation pathway by mediating the deneddylation of the cullin subunits of E3 ligase complexes, leading to modify the Ubl ligase activity. The protein is COP9 signalosome complex subunit 3 (cops3) of Xenopus tropicalis (Western clawed frog).